The primary structure comprises 213 residues: Pyridoxine/pyridoxamine 5'-phosphate oxidase (213 aa).

Substrate contacts are provided by residues 8–11 (RKNY) and Lys66. Residues 61–66 (RIVLIK), 76–77 (FT), Arg82, Lys83, and Gln105 each bind FMN. The substrate site is built by Tyr123, Arg127, and Ser131. FMN contacts are provided by residues 140 to 141 (QS) and Trp184. 190–192 (RLH) provides a ligand contact to substrate. Residue Arg194 coordinates FMN.

The protein belongs to the pyridoxamine 5'-phosphate oxidase family. In terms of assembly, homodimer. FMN serves as cofactor.

It catalyses the reaction pyridoxamine 5'-phosphate + O2 + H2O = pyridoxal 5'-phosphate + H2O2 + NH4(+). The enzyme catalyses pyridoxine 5'-phosphate + O2 = pyridoxal 5'-phosphate + H2O2. The protein operates within cofactor metabolism; pyridoxal 5'-phosphate salvage; pyridoxal 5'-phosphate from pyridoxamine 5'-phosphate: step 1/1. Its pathway is cofactor metabolism; pyridoxal 5'-phosphate salvage; pyridoxal 5'-phosphate from pyridoxine 5'-phosphate: step 1/1. Catalyzes the oxidation of either pyridoxine 5'-phosphate (PNP) or pyridoxamine 5'-phosphate (PMP) into pyridoxal 5'-phosphate (PLP). This is Pyridoxine/pyridoxamine 5'-phosphate oxidase from Paraburkholderia phytofirmans (strain DSM 17436 / LMG 22146 / PsJN) (Burkholderia phytofirmans).